Consider the following 326-residue polypeptide: Putative ubiquitin-conjugating enzyme E2 38 (326 aa).

The 161-residue stretch at 54–214 (NWVKKVQDEW…VFLLSLKTMV (161 aa)) folds into the UBC core domain. Cys-140 serves as the catalytic Glycyl thioester intermediate. The tract at residues 297-326 (LAEKPKPPVNNANTENQSKKKTRKRSRSSR) is disordered. Residues 315–326 (KKKTRKRSRSSR) are compositionally biased toward basic residues.

This sequence belongs to the ubiquitin-conjugating enzyme family.

The enzyme catalyses S-ubiquitinyl-[E1 ubiquitin-activating enzyme]-L-cysteine + [E2 ubiquitin-conjugating enzyme]-L-cysteine = [E1 ubiquitin-activating enzyme]-L-cysteine + S-ubiquitinyl-[E2 ubiquitin-conjugating enzyme]-L-cysteine.. The protein operates within protein modification; protein ubiquitination. Functionally, accepts the ubiquitin from the E1 complex and catalyzes its covalent attachment to other proteins. The polypeptide is Putative ubiquitin-conjugating enzyme E2 38 (UBC38) (Arabidopsis thaliana (Mouse-ear cress)).